A 186-amino-acid polypeptide reads, in one-letter code: Protein FAM219A (186 aa).

Disordered regions lie at residues 1–47 and 59–132; these read MMEE…NYKP and ELAR…GYSS. The span at 67–81 shows a compositional bias: polar residues; it reads KNGTVGSPVNQQPKK. The span at 123-132 shows a compositional bias: low complexity; it reads SRYSSSGYSS.

Belongs to the FAM219 family.

In Danio rerio (Zebrafish), this protein is Protein FAM219A (fam219a).